The sequence spans 596 residues: DNA mismatch repair protein MutL (596 aa).

Belongs to the DNA mismatch repair MutL/HexB family.

Its function is as follows. This protein is involved in the repair of mismatches in DNA. It is required for dam-dependent methyl-directed DNA mismatch repair. May act as a 'molecular matchmaker', a protein that promotes the formation of a stable complex between two or more DNA-binding proteins in an ATP-dependent manner without itself being part of a final effector complex. This chain is DNA mismatch repair protein MutL, found in Leptospira borgpetersenii serovar Hardjo-bovis (strain JB197).